Consider the following 106-residue polypeptide: uncharacterized protein (106 aa).

Helical transmembrane passes span 43 to 63 and 86 to 106; these read CSTIIACNLGSWFFKISLAIV and IPELALIIICTFIYFLYFSLF.

The protein localises to the membrane. This is an uncharacterized protein from Saccharomyces cerevisiae (strain ATCC 204508 / S288c) (Baker's yeast).